Consider the following 367-residue polypeptide: tRNA-specific 2-thiouridylase MnmA (367 aa).

ATP is bound by residues 9–16 (LMSGGVDS) and phenylalanine 35. The active-site Nucleophile is the cysteine 107. Cysteine 107 and cysteine 205 are oxidised to a cystine. Glycine 131 serves as a coordination point for ATP. The interaction with tRNA stretch occupies residues 155 to 157 (KDQ). Cysteine 205 (cysteine persulfide intermediate) is an active-site residue.

Belongs to the MnmA/TRMU family.

The protein resides in the cytoplasm. The enzyme catalyses S-sulfanyl-L-cysteinyl-[protein] + uridine(34) in tRNA + AH2 + ATP = 2-thiouridine(34) in tRNA + L-cysteinyl-[protein] + A + AMP + diphosphate + H(+). Functionally, catalyzes the 2-thiolation of uridine at the wobble position (U34) of tRNA, leading to the formation of s(2)U34. This is tRNA-specific 2-thiouridylase MnmA from Petrotoga mobilis (strain DSM 10674 / SJ95).